We begin with the raw amino-acid sequence, 537 residues long: Hydroxylamine reductase (537 aa).

Positions 3, 6, 15, and 21 each coordinate [4Fe-4S] cluster. Residues His-239, Glu-263, Cys-307, Cys-393, Cys-421, Cys-446, Glu-480, and Lys-482 each contribute to the hybrid [4Fe-2O-2S] cluster site. At Cys-393 the chain carries Cysteine persulfide.

This sequence belongs to the HCP family. It depends on [4Fe-4S] cluster as a cofactor. Requires hybrid [4Fe-2O-2S] cluster as cofactor.

The protein resides in the cytoplasm. It carries out the reaction A + NH4(+) + H2O = hydroxylamine + AH2 + H(+). In terms of biological role, catalyzes the reduction of hydroxylamine to form NH(3) and H(2)O. The sequence is that of Hydroxylamine reductase from Lawsonia intracellularis (strain PHE/MN1-00).